A 210-amino-acid polypeptide reads, in one-letter code: Menaquinone reductase, multiheme cytochrome c subunit (210 aa).

A helical membrane pass occupies residues 20–40 (GGAAPFFVGLVVALVFGWWAF). Heme-binding residues include Cys-67, Cys-70, His-71, Cys-88, Cys-91, His-92, Cys-140, Cys-143, His-144, Cys-152, Cys-155, His-156, Cys-186, Cys-189, His-190, Cys-205, Cys-208, and His-209.

This sequence belongs to the multiheme cytochrome c family. In terms of assembly, the Qrc complex is composed of four subunits: QrcA, QrcB, QrcC and QrcD. Can form a supercomplex with the [NiFe] hydrogenase HynA1 and the tetraheme Type I cytochrome c3 TpIc(3), its physiological electron donors. It depends on heme c as a cofactor.

Its subcellular location is the cell inner membrane. Component of the respiratory Qrc complex, that catalyzes the reduction of the menaquinone pool using electrons transferred from the reduced periplasmic cytochrome c3, and which is probably involved in sulfate respiration. Is likely essential for growth on H(2) or formate since the periplasmic hydrogenases and/or formate dehydrogenases act as primary electron donors for the Qrc complex. This chain is Menaquinone reductase, multiheme cytochrome c subunit, found in Nitratidesulfovibrio vulgaris (strain ATCC 29579 / DSM 644 / CCUG 34227 / NCIMB 8303 / VKM B-1760 / Hildenborough) (Desulfovibrio vulgaris).